The primary structure comprises 351 residues: Histidinol-phosphate aminotransferase (351 aa).

K209 bears the N6-(pyridoxal phosphate)lysine mark.

Belongs to the class-II pyridoxal-phosphate-dependent aminotransferase family. Histidinol-phosphate aminotransferase subfamily. In terms of assembly, homodimer. The cofactor is pyridoxal 5'-phosphate.

It carries out the reaction L-histidinol phosphate + 2-oxoglutarate = 3-(imidazol-4-yl)-2-oxopropyl phosphate + L-glutamate. The protein operates within amino-acid biosynthesis; L-histidine biosynthesis; L-histidine from 5-phospho-alpha-D-ribose 1-diphosphate: step 7/9. The sequence is that of Histidinol-phosphate aminotransferase from Chromohalobacter salexigens (strain ATCC BAA-138 / DSM 3043 / CIP 106854 / NCIMB 13768 / 1H11).